Consider the following 269-residue polypeptide: Calretinin (269 aa).

6 consecutive EF-hand domains span residues 14–49, 61–96, 105–140, 149–184, 193–228, and 230–265; these read LSAS…LESA, SLGD…EENF, GSSS…LLKK, KLQE…QENF, LSSE…LYEK, and KKEM…VLCS. Positions 27, 29, 31, 33, 38, 74, 76, 78, 80, 85, 118, 120, 122, 124, 129, 162, 164, 166, 168, 173, 206, 208, 210, and 217 each coordinate Ca(2+).

The protein belongs to the calbindin family.

It localises to the synapse. The protein resides in the cell projection. The protein localises to the dendrite. In terms of biological role, calcium-binding protein involved in calcium homeostasis and signal transduction. It plays a critical role in buffering intracellular calcium levels and modulating calcium-dependent signaling pathways. Predominantly expressed in specific neuronal populations, influences synaptic plasticity and neuronal excitability, contributing to learning and memory. During embryonic development, it facilitates neuronal differentiation and maturation. In Gallus gallus (Chicken), this protein is Calretinin (CALB2).